We begin with the raw amino-acid sequence, 496 residues long: Glycerol kinase (496 aa).

Thr12 contributes to the ADP binding site. Residues Thr12, Thr13, and Ser14 each coordinate ATP. Sn-glycerol 3-phosphate is bound at residue Thr12. Arg16 serves as a coordination point for ADP. Residues Arg82, Glu83, and Tyr134 each coordinate sn-glycerol 3-phosphate. Glycerol-binding residues include Arg82, Glu83, and Tyr134. His230 bears the Phosphohistidine; by HPr mark. A sn-glycerol 3-phosphate-binding site is contributed by Asp244. The glycerol site is built by Asp244 and Gln245. Residues Thr266 and Gly309 each coordinate ADP. Residues Thr266, Gly309, Gln313, and Gly410 each contribute to the ATP site. ADP contacts are provided by Gly410 and Asn414.

Belongs to the FGGY kinase family. In terms of assembly, homotetramer and homodimer (in equilibrium). Post-translationally, the phosphoenolpyruvate-dependent sugar phosphotransferase system (PTS), including enzyme I, and histidine-containing protein (HPr) are required for the phosphorylation, which leads to the activation of the enzyme.

It catalyses the reaction glycerol + ATP = sn-glycerol 3-phosphate + ADP + H(+). It participates in polyol metabolism; glycerol degradation via glycerol kinase pathway; sn-glycerol 3-phosphate from glycerol: step 1/1. Its activity is regulated as follows. Activated by phosphorylation and inhibited by fructose 1,6-bisphosphate (FBP). Key enzyme in the regulation of glycerol uptake and metabolism. Catalyzes the phosphorylation of glycerol to yield sn-glycerol 3-phosphate. This chain is Glycerol kinase, found in Bacillus thuringiensis (strain Al Hakam).